A 256-amino-acid chain; its full sequence is Thiazole synthase (256 aa).

Catalysis depends on lysine 95, which acts as the Schiff-base intermediate with DXP. 1-deoxy-D-xylulose 5-phosphate is bound by residues glycine 156, 182–183 (AG), and 204–205 (NT).

This sequence belongs to the ThiG family. In terms of assembly, homotetramer. Forms heterodimers with either ThiH or ThiS.

The protein resides in the cytoplasm. It carries out the reaction [ThiS sulfur-carrier protein]-C-terminal-Gly-aminoethanethioate + 2-iminoacetate + 1-deoxy-D-xylulose 5-phosphate = [ThiS sulfur-carrier protein]-C-terminal Gly-Gly + 2-[(2R,5Z)-2-carboxy-4-methylthiazol-5(2H)-ylidene]ethyl phosphate + 2 H2O + H(+). It participates in cofactor biosynthesis; thiamine diphosphate biosynthesis. Its function is as follows. Catalyzes the rearrangement of 1-deoxy-D-xylulose 5-phosphate (DXP) to produce the thiazole phosphate moiety of thiamine. Sulfur is provided by the thiocarboxylate moiety of the carrier protein ThiS. In vitro, sulfur can be provided by H(2)S. This Shigella flexneri protein is Thiazole synthase.